Here is a 546-residue protein sequence, read N- to C-terminus: Beta-amylase (546 aa).

The signal sequence occupies residues 1-30 (MKNQFQYCCIVILSVVMLFVSLLIPQASSA). Asp79 lines the substrate pocket. Residues Glu86, Asp90, and Gln91 each coordinate Ca(2+). Substrate contacts are provided by His119 and Asp127. Cys121 and Cys129 are disulfide-bonded. Ca(2+) contacts are provided by Glu171 and Glu174. The Proton donor role is filled by Glu202. Substrate is bound by residues Lys317, His322, and Thr360. Glu397 functions as the Proton acceptor in the catalytic mechanism. Residues 398–399 (NA) and Arg427 each bind substrate. A CBM20 domain is found at 444 to 546 (LLGVTPVMQT…LKTTSHTSSW (103 aa)).

This sequence belongs to the glycosyl hydrolase 14 family. Monomer. It depends on Ca(2+) as a cofactor.

The enzyme catalyses Hydrolysis of (1-&gt;4)-alpha-D-glucosidic linkages in polysaccharides so as to remove successive maltose units from the non-reducing ends of the chains.. In Bacillus cereus, this protein is Beta-amylase (spoII).